The chain runs to 396 residues: NADH-quinone oxidoreductase subunit D (396 aa).

It belongs to the complex I 49 kDa subunit family. NDH-1 is composed of 14 different subunits. Subunits NuoB, C, D, E, F, and G constitute the peripheral sector of the complex.

The protein resides in the cell inner membrane. It carries out the reaction a quinone + NADH + 5 H(+)(in) = a quinol + NAD(+) + 4 H(+)(out). NDH-1 shuttles electrons from NADH, via FMN and iron-sulfur (Fe-S) centers, to quinones in the respiratory chain. The immediate electron acceptor for the enzyme in this species is believed to be ubiquinone. Couples the redox reaction to proton translocation (for every two electrons transferred, four hydrogen ions are translocated across the cytoplasmic membrane), and thus conserves the redox energy in a proton gradient. The protein is NADH-quinone oxidoreductase subunit D of Brucella abortus (strain S19).